Reading from the N-terminus, the 500-residue chain is Glycerol kinase (500 aa).

Residue Thr-13 participates in ADP binding. ATP is bound by residues Thr-13, Thr-14, and Ser-15. Position 13 (Thr-13) interacts with sn-glycerol 3-phosphate. Arg-17 is an ADP binding site. Positions 83, 84, 135, and 245 each coordinate sn-glycerol 3-phosphate. Glycerol-binding residues include Arg-83, Glu-84, Tyr-135, Asp-245, and Gln-246. ADP is bound by residues Thr-267 and Gly-310. ATP is bound by residues Thr-267, Gly-310, Gln-314, and Gly-411. The ADP site is built by Gly-411 and Asn-415.

This sequence belongs to the FGGY kinase family. Homotetramer and homodimer (in equilibrium).

The enzyme catalyses glycerol + ATP = sn-glycerol 3-phosphate + ADP + H(+). It functions in the pathway polyol metabolism; glycerol degradation via glycerol kinase pathway; sn-glycerol 3-phosphate from glycerol: step 1/1. Its activity is regulated as follows. Activated by phosphorylation and inhibited by fructose 1,6-bisphosphate (FBP). Key enzyme in the regulation of glycerol uptake and metabolism. Catalyzes the phosphorylation of glycerol to yield sn-glycerol 3-phosphate. In Carboxydothermus hydrogenoformans (strain ATCC BAA-161 / DSM 6008 / Z-2901), this protein is Glycerol kinase.